A 332-amino-acid polypeptide reads, in one-letter code: Ketol-acid reductoisomerase (NADP(+)) (332 aa).

Positions 1-182 (MAVIYYDKDC…GSNRAGILET (182 aa)) constitute a KARI N-terminal Rossmann domain. NADP(+) is bound by residues 25 to 28 (YGAQ) and 83 to 86 (DTSQ). The active site involves histidine 108. Residue glycine 134 participates in NADP(+) binding. The region spanning 183–328 (TFAEETETDL…AELRSMMSWL (146 aa)) is the KARI C-terminal knotted domain. Aspartate 191, glutamate 195, glutamate 227, and glutamate 231 together coordinate Mg(2+). Serine 252 contributes to the substrate binding site.

The protein belongs to the ketol-acid reductoisomerase family. Mg(2+) is required as a cofactor.

It carries out the reaction (2R)-2,3-dihydroxy-3-methylbutanoate + NADP(+) = (2S)-2-acetolactate + NADPH + H(+). It catalyses the reaction (2R,3R)-2,3-dihydroxy-3-methylpentanoate + NADP(+) = (S)-2-ethyl-2-hydroxy-3-oxobutanoate + NADPH + H(+). It functions in the pathway amino-acid biosynthesis; L-isoleucine biosynthesis; L-isoleucine from 2-oxobutanoate: step 2/4. It participates in amino-acid biosynthesis; L-valine biosynthesis; L-valine from pyruvate: step 2/4. Functionally, involved in the biosynthesis of branched-chain amino acids (BCAA). Catalyzes an alkyl-migration followed by a ketol-acid reduction of (S)-2-acetolactate (S2AL) to yield (R)-2,3-dihydroxy-isovalerate. In the isomerase reaction, S2AL is rearranged via a Mg-dependent methyl migration to produce 3-hydroxy-3-methyl-2-ketobutyrate (HMKB). In the reductase reaction, this 2-ketoacid undergoes a metal-dependent reduction by NADPH to yield (R)-2,3-dihydroxy-isovalerate. In Dehalococcoides mccartyi (strain ATCC BAA-2100 / JCM 16839 / KCTC 5957 / BAV1), this protein is Ketol-acid reductoisomerase (NADP(+)).